Here is a 150-residue protein sequence, read N- to C-terminus: Leukotriene C4 synthase (150 aa).

Residues 1 to 6 are Cytoplasmic-facing; the sequence is MKDEVA. The chain crosses the membrane as a helical span at residues 7–27; sequence LLATVTLLGVLLQAYFSLQVI. The Lumenal portion of the chain corresponds to 28 to 48; the sequence is RARRAHRVSPPLTTGPPEFER. Arginine 30 contributes to the glutathione binding site. Catalysis depends on arginine 31, which acts as the Proton donor. A Phosphoserine modification is found at serine 36. Residues 49-69 form a helical membrane-spanning segment; the sequence is VYRAQVNCSEYFPLFLATLWV. Residues 51-55 and 58-59 each bind glutathione; these read RAQVN and EY. Residues 70-73 lie on the Cytoplasmic side of the membrane; sequence AGVY. Residues 74 to 94 form a helical membrane-spanning segment; it reads FHEGAAALCGLVYLFTRLRYF. Residue 93–97 participates in glutathione binding; it reads YFWGY. Residues 95–104 are Lumenal-facing; the sequence is WGYARSAQLR. Residue arginine 104 is the Proton acceptor of the active site. Residues 105–124 form a helical membrane-spanning segment; that stretch reads LAPLYASARALWLLLALATL. At 125-150 the chain is on the cytoplasmic side; that stretch reads GLLAHFLPAAARAALLRLLRALLRTA.

This sequence belongs to the MAPEG family. As to quaternary structure, homotrimer. Interacts with ALOX5AP and ALOX5. Post-translationally, phosphorylation at Ser-36 by RPS6KB1 inhibits the leukotriene-C4 synthase activity.

The protein resides in the nucleus outer membrane. It is found in the endoplasmic reticulum membrane. The protein localises to the nucleus membrane. It carries out the reaction leukotriene C4 = leukotriene A4 + glutathione. It catalyses the reaction (13S,14S)-epoxy-(4Z,7Z,9E,11E,16Z,19Z)-docosahexaenoate + glutathione = (13R)-S-glutathionyl-(14S)-hydroxy-(4Z,7Z,9E,11E,16Z,19Z)-docosahexaenoate. The protein operates within lipid metabolism; leukotriene C4 biosynthesis. With respect to regulation, inhibited by MK886. Its function is as follows. Catalyzes the conjugation of leukotriene A4 with reduced glutathione (GSH) to form leukotriene C4 with high specificity. Can also catalyze the transfer of a glutathionyl group from glutathione (GSH) to 13(S),14(S)-epoxy-docosahexaenoic acid to form maresin conjugate in tissue regeneration 1 (MCTR1), a bioactive lipid mediator that possess potent anti-inflammatory and proresolving actions. This chain is Leukotriene C4 synthase (LTC4S), found in Cavia porcellus (Guinea pig).